The sequence spans 135 residues: ATP synthase epsilon chain (135 aa).

Belongs to the ATPase epsilon chain family. In terms of assembly, F-type ATPases have 2 components, CF(1) - the catalytic core - and CF(0) - the membrane proton channel. CF(1) has five subunits: alpha(3), beta(3), gamma(1), delta(1), epsilon(1). CF(0) has three main subunits: a, b and c.

It localises to the cell inner membrane. Produces ATP from ADP in the presence of a proton gradient across the membrane. This chain is ATP synthase epsilon chain, found in Allorhizobium ampelinum (strain ATCC BAA-846 / DSM 112012 / S4) (Agrobacterium vitis (strain S4)).